The chain runs to 142 residues: Large ribosomal subunit protein bL17 (142 aa).

It belongs to the bacterial ribosomal protein bL17 family. In terms of assembly, part of the 50S ribosomal subunit. Contacts protein L32.

In Chlamydia pneumoniae (Chlamydophila pneumoniae), this protein is Large ribosomal subunit protein bL17.